A 344-amino-acid polypeptide reads, in one-letter code: Lipase chaperone (344 aa).

A helical transmembrane segment spans residues 14-34 (AVVYGVVGLAAIAGVAMWSGA). A disordered region spans residues 39–78 (ATGASGESPEASVAGGSVTAPPQAAVPASTGLPPSLAGSS).

Belongs to the lipase chaperone family.

It localises to the cell inner membrane. May be involved in the folding of the extracellular lipase during its passage through the periplasm. The sequence is that of Lipase chaperone (lifO) from Pseudomonas sp. (strain KWI-56).